The chain runs to 416 residues: N-acetylmuramoyl-L-alanine amidase AmiC (416 aa).

Residues 1-26 form the signal peptide; sequence MIKLTRRQIIRRTAGTLFALSPIASA. The segment at 166 to 191 is disordered; the sequence is RGSPEADLAQNTTPQPGRGRNGRRPV. The MurNAc-LAA domain maps to 192–405; it reads IMLDPGHGGE…CAQSIASGVQ (214 aa).

It belongs to the N-acetylmuramoyl-L-alanine amidase 3 family.

It localises to the periplasm. It catalyses the reaction Hydrolyzes the link between N-acetylmuramoyl residues and L-amino acid residues in certain cell-wall glycopeptides.. Functionally, cell-wall hydrolase involved in septum cleavage during cell division. This chain is N-acetylmuramoyl-L-alanine amidase AmiC (amiC), found in Neisseria meningitidis serogroup B (strain ATCC BAA-335 / MC58).